Reading from the N-terminus, the 104-residue chain is MAAKIRREDEVIVLAGKDKGKRGKVSRVLPTGKLIVEGINLIKKHQKPNPQMGVTGGIVEKEAPIQASNVAIFNSATGKADRVGFRFEDGKKVRFFKSNSELVK.

It belongs to the universal ribosomal protein uL24 family. Part of the 50S ribosomal subunit.

Functionally, one of two assembly initiator proteins, it binds directly to the 5'-end of the 23S rRNA, where it nucleates assembly of the 50S subunit. One of the proteins that surrounds the polypeptide exit tunnel on the outside of the subunit. This chain is Large ribosomal subunit protein uL24, found in Shewanella loihica (strain ATCC BAA-1088 / PV-4).